Here is a 485-residue protein sequence, read N- to C-terminus: Acyl transferase 1 (485 aa).

His-172 serves as the catalytic Proton acceptor.

It belongs to the plant acyltransferase family. In terms of tissue distribution, highly expressed in young panicles. Expressed in leaf sheaths and panicles.

Functionally, involved in defense against pathogens. May contribute to disease resistance by potentiating disease resistance signaling, or producing phytoalexin-like secondary products. The protein is Acyl transferase 1 of Oryza sativa subsp. japonica (Rice).